A 318-amino-acid polypeptide reads, in one-letter code: uncharacterized protein (318 aa).

The protein belongs to the NAD(P)-dependent epimerase/dehydratase family.

This is an uncharacterized protein from Staphylococcus epidermidis (strain ATCC 12228 / FDA PCI 1200).